Consider the following 197-residue polypeptide: Na(+)-translocating NADH-quinone reductase subunit E (197 aa).

6 helical membrane passes run 11-31 (SVFI…FLAV), 35-55 (VSTA…SVPA), 76-96 (FLKF…LEMF), 108-128 (LGIY…VSFM), 139-159 (VVYG…LAGI), and 175-195 (LGIT…FSGI).

Belongs to the NqrDE/RnfAE family. As to quaternary structure, composed of six subunits; NqrA, NqrB, NqrC, NqrD, NqrE and NqrF.

Its subcellular location is the cell inner membrane. The enzyme catalyses a ubiquinone + n Na(+)(in) + NADH + H(+) = a ubiquinol + n Na(+)(out) + NAD(+). NQR complex catalyzes the reduction of ubiquinone-1 to ubiquinol by two successive reactions, coupled with the transport of Na(+) ions from the cytoplasm to the periplasm. NqrA to NqrE are probably involved in the second step, the conversion of ubisemiquinone to ubiquinol. The sequence is that of Na(+)-translocating NADH-quinone reductase subunit E from Neisseria meningitidis serogroup A / serotype 4A (strain DSM 15465 / Z2491).